We begin with the raw amino-acid sequence, 260 residues long: Small ribosomal subunit protein eS1 (260 aa).

A compositionally biased stretch (basic residues) spans 1–18; the sequence is MAVGKNKRMSKGKKGGKK. Residues 1-20 form a disordered region; it reads MAVGKNKRMSKGKKGGKKKA.

The protein belongs to the eukaryotic ribosomal protein eS1 family. In terms of assembly, component of the small ribosomal subunit. Mature ribosomes consist of a small (40S) and a large (60S) subunit. The 40S subunit contains about 33 different proteins and 1 molecule of RNA (18S). The 60S subunit contains about 49 different proteins and 3 molecules of RNA (25S, 5.8S and 5S).

Its subcellular location is the cytoplasm. This Ostreococcus lucimarinus (strain CCE9901) protein is Small ribosomal subunit protein eS1.